We begin with the raw amino-acid sequence, 509 residues long: Maturase K (509 aa).

It belongs to the intron maturase 2 family. MatK subfamily.

It is found in the plastid. It localises to the chloroplast. Its function is as follows. Usually encoded in the trnK tRNA gene intron. Probably assists in splicing its own and other chloroplast group II introns. This chain is Maturase K, found in Vachellia farnesiana (Sweet acacia).